We begin with the raw amino-acid sequence, 341 residues long: Putative UPF0607 protein ENSP00000383783 (341 aa).

Basic and acidic residues predominate over residues 75 to 101 (EVRAEEPKEATEVKDQVETQGQEDNKR). Disordered regions lie at residues 75-115 (EVRA…TSSL) and 216-278 (GLLM…PPPA). The span at 234-245 (SSRSSPSRAASH) shows a compositional bias: low complexity.

The protein belongs to the UPF0607 family.

The sequence is that of Putative UPF0607 protein ENSP00000383783 from Homo sapiens (Human).